The primary structure comprises 118 residues: Large ribosomal subunit protein bL20 (118 aa).

The protein belongs to the bacterial ribosomal protein bL20 family.

Its function is as follows. Binds directly to 23S ribosomal RNA and is necessary for the in vitro assembly process of the 50S ribosomal subunit. It is not involved in the protein synthesizing functions of that subunit. This chain is Large ribosomal subunit protein bL20, found in Elusimicrobium minutum (strain Pei191).